The following is a 219-amino-acid chain: 2,3-bisphosphoglycerate-dependent phosphoglycerate mutase 2 (219 aa).

Substrate contacts are provided by residues 8–15 (RHGQSIWN), 21–22 (TG), R58, 85–88 (ERHY), K96, 112–113 (RR), and 156–157 (GN). Residue H9 is the Tele-phosphohistidine intermediate of the active site. E85 functions as the Proton donor/acceptor in the catalytic mechanism.

This sequence belongs to the phosphoglycerate mutase family. BPG-dependent PGAM subfamily.

It catalyses the reaction (2R)-2-phosphoglycerate = (2R)-3-phosphoglycerate. Its pathway is carbohydrate degradation; glycolysis; pyruvate from D-glyceraldehyde 3-phosphate: step 3/5. In terms of biological role, catalyzes the interconversion of 2-phosphoglycerate and 3-phosphoglycerate. This chain is 2,3-bisphosphoglycerate-dependent phosphoglycerate mutase 2, found in Gloeobacter violaceus (strain ATCC 29082 / PCC 7421).